A 416-amino-acid chain; its full sequence is MMTAVSQMSVPSSRILLDVDCRVCEDHSSGKHYSIFSCDGCAGFFKRSIRRHRQYVCKNKGSPSEGQCKVDKTHRNQCRACRLRKCLEIGMNKDAVQHERGPRNSSLRRQQMMFDHGSSPNSPEMGSESDAIILPTSSMNRDTVAGTAARIFFALVGFCQNPLNGVPKERQMTMFQQNWAALLVLHATETRAITSKQIRTETISGSSEQRNAVANAFEIIERLQLDNREYMMLKHFTMWRDTPSAIQIVFQLASIQNFTHRTEPTRYIQCINAIAAIPTTSIIDVLFRPSIGSASMPRLIQDMFKPPQQPTPTSLFPMANFNLNFLLKQEKTETEEGEDIEEEDDATSSNQFDENSSTDDRSVGELDPVQLFLALNSSTQPSSASSPSSSRPRHSIRSITELLSIQEEESVNVEEV.

The nuclear receptor DNA-binding region spans 18-98 (DVDCRVCEDH…IGMNKDAVQH (81 aa)). 2 NR C4-type zinc fingers span residues 21-41 (CRVC…CDGC) and 57-86 (CKNK…LRKC). A disordered region spans residues 331–398 (KTETEEGEDI…SSRPRHSIRS (68 aa)). Positions 335–346 (EEGEDIEEEDDA) are enriched in acidic residues. Residues 377 to 390 (SSTQPSSASSPSSS) are compositionally biased toward low complexity.

It belongs to the nuclear hormone receptor family. Expressed in linker cell.

The protein resides in the nucleus. Its function is as follows. Orphan nuclear receptor that binds DNA containing an extended core motif half-site sequence 5'-AAGTCA-3'. In males, plays an essential role in the migration of the linker cell which guides gonad elongation during the L3 and L4 stages of larval development by negatively regulating the expression of netrin receptor unc-5 at the mid-L3 stage. Involved in the regulation of non-apoptotic cell death in the linker cell, acting upstream of or in parallel to transcription factor hsf-1. Represses hypoxia response genes, fmo-2 and acs-2, in both normoxic and hypoxic conditions, probably acting via repression of nuclear receptor nhr-49. The sequence is that of Nuclear hormone receptor family member nhr-67 (nhr-67) from Caenorhabditis elegans.